The chain runs to 446 residues: Tripartite motif-containing protein 43C (446 aa).

The segment at 16 to 57 adopts an RING-type zinc-finger fold; the sequence is CSICQGIFMDPVYLRCGHKFCETCLLLFQEDIKFPAYCPTCR. The segment at 88 to 129 adopts a B box-type zinc-finger fold; the sequence is SEEHKCVTHKAKKMIFCDKSKILLCHLCSDSQEHSGHTHCSI. The Zn(2+) site is built by C93, H96, C115, and H121. The 176-residue stretch at 271 to 446 folds into the B30.2/SPRY domain; it reads RLRAHSIPGL…VRPFFFAAYT (176 aa).

Belongs to the TRIM/RBCC family.

The chain is Tripartite motif-containing protein 43C from Mus musculus (Mouse).